The following is a 150-amino-acid chain: Large ribosomal subunit protein bL9 (150 aa).

It belongs to the bacterial ribosomal protein bL9 family.

In terms of biological role, binds to the 23S rRNA. The polypeptide is Large ribosomal subunit protein bL9 (Buchnera aphidicola subsp. Acyrthosiphon pisum (strain 5A)).